The sequence spans 58 residues: Ribulose bisphosphate carboxylase large chain (58 aa).

Residues 1–2 (MS) constitute a propeptide that is removed on maturation. An N-acetylproline modification is found at Pro-3. At Lys-14 the chain carries N6,N6,N6-trimethyllysine.

Belongs to the RuBisCO large chain family. Type I subfamily. Heterohexadecamer of 8 large chains and 8 small chains.

The protein resides in the plastid. Its subcellular location is the chloroplast. The catalysed reaction is 2 (2R)-3-phosphoglycerate + 2 H(+) = D-ribulose 1,5-bisphosphate + CO2 + H2O. The enzyme catalyses D-ribulose 1,5-bisphosphate + O2 = 2-phosphoglycolate + (2R)-3-phosphoglycerate + 2 H(+). RuBisCO catalyzes two reactions: the carboxylation of D-ribulose 1,5-bisphosphate, the primary event in carbon dioxide fixation, as well as the oxidative fragmentation of the pentose substrate in the photorespiration process. Both reactions occur simultaneously and in competition at the same active site. The polypeptide is Ribulose bisphosphate carboxylase large chain (rbcL) (Euphorbia characias (Albanian spurge)).